The chain runs to 2907 residues: Fibrillin-2 (2907 aa).

The first 28 residues, 1 to 28 (MGRRRRLCLQPYFVWLGCVALWAQGTDG), serve as a signal peptide directing secretion. The tract at residues 26-58 (TDGQPQPPPPKTLRPQPPPQQVRPAVAGSEGGF) is disordered. Positions 29-77 (QPQPPPPKTLRPQPPPQQVRPAVAGSEGGFMGPEYRDEGAVAASRVRRR) are excised as a propeptide. Residues 30-46 (PQPPPPKTLRPQPPPQQ) are compositionally biased toward pro residues. 3 EGF-like domains span residues 111 to 142 (IVPICRNSCGDGFCSRPNMCTCSSGQISPTCG), 145 to 176 (SIQQCSVRCMNGGTCADDHCQCQKGYIGTYCG), and 176 to 208 (GQPVCENGCQNGGRCIGPNRCACVYGFTGPQCE). Disulfide bonds link cysteine 115–cysteine 124, cysteine 119–cysteine 130, cysteine 132–cysteine 141, cysteine 149–cysteine 159, cysteine 153–cysteine 164, cysteine 166–cysteine 175, cysteine 180–cysteine 190, cysteine 184–cysteine 196, and cysteine 198–cysteine 207. An interaction with MFAP4 region spans residues 149 to 359 (CSVRCMNGGT…VTSTDGSRCI (211 aa)). Residues 214–266 (GPCFTQVNNQMCQGQLTGIVCTKTLCCATIGRAWGHPCEMCPAQPQPCRRGFI) enclose the TB 1 domain. Residues 276 to 317 (DVDECQAIPGLCQGGNCINTVGSFECRCPAGHKQSETTQKCE) form the EGF-like 4; calcium-binding domain. Cystine bridges form between cysteine 280/cysteine 292, cysteine 287/cysteine 301, cysteine 303/cysteine 316, cysteine 322/cysteine 334, cysteine 329/cysteine 343, and cysteine 345/cysteine 358. Serine 298 carries an O-linked (Glc) serine glycan. In terms of domain architecture, EGF-like 5; calcium-binding spans 318 to 359 (DIDECSVIPGVCETGDCSNTVGSYFCLCPRGFVTSTDGSRCI). Serine 340 is a glycosylation site (O-linked (Glc) serine). Residues 364-417 (GTCFSGLVNGRCAQELPGRMAKAQCCCEPGRCWSIGTIPEACPVRGSEEYRRLC) form the TB 2 domain. A glycan (N-linked (GlcNAc...) asparagine) is linked at asparagine 485. Residues 487–527 (TIDICKHHANLCLNGRCIPTVSSYRCECNMGYKQDANGDCI) form the EGF-like 6 domain. 15 disulfides stabilise this stretch: cysteine 491/cysteine 503, cysteine 498/cysteine 512, cysteine 514/cysteine 526, cysteine 532/cysteine 542, cysteine 537/cysteine 551, cysteine 553/cysteine 566, cysteine 572/cysteine 584, cysteine 579/cysteine 593, cysteine 595/cysteine 608, cysteine 614/cysteine 625, cysteine 620/cysteine 634, cysteine 636/cysteine 649, cysteine 655/cysteine 666, cysteine 661/cysteine 675, and cysteine 677/cysteine 690. Serine 509 carries an O-linked (Glc) serine glycan. Residues 528–567 (DVDECTSNPCSNGDCVNTPGSYYCKCHAGFQRTPTKQACI) enclose the EGF-like 7; calcium-binding domain. Serine 548 carries an O-linked (Glc) serine glycan. Positions 568-609 (DIDECIQNGVLCKNGRCVNTDGSFQCICNAGFELTTDGKNCV) constitute an EGF-like 8; calcium-binding domain. Serine 590 is a glycosylation site (O-linked (Glc) serine). The 41-residue stretch at 610 to 650 (DHDECTTTNMCLNGMCINEDGSFKCVCKPGFILAPNGRYCT) folds into the EGF-like 9; calcium-binding domain. Serine 631 is a glycosylation site (O-linked (Glc) serine). The region spanning 651–691 (DVDECQTPGICMNGHCINNEGSFRCDCPPGLAVGVDGRVCV) is the EGF-like 10; calcium-binding domain. O-linked (Glc) serine glycosylation occurs at serine 672. Residues 697 to 749 (STCYGEIKKGVCVRPFPGAVTKSECCCANPDYGFGEPCQPCPAKNSAEFHGLC) form the TB 3 domain. Residues 761–802 (DINECALDPDICANGICENLRGSYRCNCNSGYEPDASGRNCI) form the EGF-like 11; calcium-binding domain. 9 disulfide bridges follow: cysteine 765-cysteine 777, cysteine 772-cysteine 786, cysteine 788-cysteine 801, cysteine 807-cysteine 819, cysteine 814-cysteine 828, cysteine 830-cysteine 843, cysteine 849-cysteine 859, cysteine 854-cysteine 868, and cysteine 870-cysteine 883. An EGF-like 12; calcium-binding domain is found at 803–844 (DIDECLVNRLLCDNGLCRNTPGSYSCTCPPGYVFRTETETCE). Serine 825 carries O-linked (Glc) serine glycosylation. One can recognise an EGF-like 13; calcium-binding domain in the interval 845–883 (DVNECESNPCVNGACRNNLGSFHCECSPGSKLSSTGLIC). Serine 865 carries an O-linked (Glc) serine glycan. Residues 889-940 (GTCWLNIQDNRCEVNINGATLKSECCATLGAAWGSPCERCELDAACPRGFAR) enclose the TB 4 domain. Residues 948–989 (DVNECEVFPGVCPNGRCVNSKGSFHCECPEGLTLDGTGRVCL) enclose the EGF-like 14; calcium-binding domain. 3 disulfides stabilise this stretch: cysteine 952-cysteine 964, cysteine 959-cysteine 973, and cysteine 975-cysteine 988. O-linked (Glc) serine glycosylation occurs at serine 970. The TB 5 domain maps to 994–1045 (EHCFLKWDEDECIHPVPGKFRMDACCCAVGAAWGTECEECPKPGTKEYETLC). The EGF-like 15; calcium-binding domain maps to 1066-1107 (DINECKAFPGMCTYGKCRNTIGSFKCRCNNGFALDMEERNCT). Intrachain disulfides connect cysteine 1070-cysteine 1082, cysteine 1077-cysteine 1091, cysteine 1093-cysteine 1106, cysteine 1112-cysteine 1124, cysteine 1119-cysteine 1133, cysteine 1135-cysteine 1149, cysteine 1155-cysteine 1167, cysteine 1162-cysteine 1176, cysteine 1178-cysteine 1191, cysteine 1197-cysteine 1209, cysteine 1204-cysteine 1218, cysteine 1220-cysteine 1233, cysteine 1239-cysteine 1250, cysteine 1246-cysteine 1259, cysteine 1261-cysteine 1274, cysteine 1280-cysteine 1292, cysteine 1287-cysteine 1301, cysteine 1303-cysteine 1316, cysteine 1322-cysteine 1334, cysteine 1329-cysteine 1343, cysteine 1345-cysteine 1358, cysteine 1364-cysteine 1377, cysteine 1371-cysteine 1386, cysteine 1388-cysteine 1399, cysteine 1405-cysteine 1418, cysteine 1412-cysteine 1427, cysteine 1429-cysteine 1440, cysteine 1446-cysteine 1458, cysteine 1453-cysteine 1467, cysteine 1469-cysteine 1482, cysteine 1488-cysteine 1499, cysteine 1494-cysteine 1508, cysteine 1510-cysteine 1523, cysteine 1529-cysteine 1540, cysteine 1535-cysteine 1549, and cysteine 1551-cysteine 1564. Serine 1088 is a glycosylation site (O-linked (Glc) serine). Asparagine 1105 is a glycosylation site (N-linked (GlcNAc...) asparagine). In terms of domain architecture, EGF-like 16; calcium-binding spans 1108-1150 (DIDECRISPDLCGSGICVNTPGSFECECFEGYESGFMMMKNCM). The EGF-like 17; calcium-binding domain maps to 1151 to 1192 (DIDECERNPLLCRGGTCVNTEGSFQCDCPLGHELSPSREDCV). O-linked (Glc) serine glycosylation is present at serine 1173. One can recognise an EGF-like 18; calcium-binding domain in the interval 1193 to 1234 (DINECSLSDNLCRNGKCVNMIGTYQCSCNPGYQATPDRQGCT). O-linked (Glc) threonine glycosylation is present at threonine 1215. The EGF-like 19; calcium-binding domain occupies 1235 to 1275 (DIDECMIMNGGCDTQCTNSEGSYECSCSEGYALMPDGRSCA). Residue serine 1256 is glycosylated (O-linked (Glc) serine). Residues 1276-1317 (DIDECENNPDICDGGQCTNIPGEYRCLCYDGFMASMDMKTCI) enclose the EGF-like 20; calcium-binding domain. The EGF-like 21; calcium-binding domain maps to 1318-1359 (DVNECDLNPNICMFGECENTKGSFICHCQLGYSVKKGTTGCT). A glycan (O-linked (Glc) serine) is linked at serine 1340. Residues 1360–1400 (DVDECEIGAHNCDMHASCLNVPGSFKCSCREGWVGNGIKCI) form the EGF-like 22; calcium-binding domain. O-linked (Glc) serine glycosylation is present at serine 1383. One can recognise an EGF-like 23; calcium-binding domain in the interval 1401-1441 (DLDECANGTHQCSINAQCVNTPGSYRCACSEGFTGDGFTCS). An N-linked (GlcNAc...) asparagine glycan is attached at asparagine 1407. The EGF-like 24; calcium-binding domain maps to 1442 to 1483 (DVDECAENTNLCENGQCLNVPGAYRCECEMGFTPASDSRSCQ). One can recognise an EGF-like 25; calcium-binding domain in the interval 1484-1524 (DIDECSFQNICVFGTCNNLPGMFHCICDDGYELDRTGGNCT). An N-linked (GlcNAc...) asparagine glycan is attached at asparagine 1522. Residues 1525–1565 (DIDECADPINCVNGLCVNTPGRYECNCPPDFQLNPTGVGCV) form the EGF-like 26; calcium-binding domain. The TB 6 domain occupies 1570-1626 (GNCYLKFGPRGDGSLSCNTEVGVGVSRSSCCCSLGKAWGNPCETCPPVNSTEYYTLC). Asparagine 1618 carries N-linked (GlcNAc...) asparagine glycosylation. One can recognise an EGF-like 27; calcium-binding domain in the interval 1643–1684 (DIDECQELPGLCQGGNCINTFGSFQCECPQGYYLSEETRICE). 6 disulfide bridges follow: cysteine 1647–cysteine 1659, cysteine 1654–cysteine 1668, cysteine 1670–cysteine 1683, cysteine 1689–cysteine 1701, cysteine 1696–cysteine 1710, and cysteine 1712–cysteine 1725. Serine 1665 carries O-linked (Glc) serine glycosylation. Positions 1685–1726 (DIDECFAHPGVCGPGTCYNTLGNYTCICPPEYMQVNGGHNCM) constitute an EGF-like 28; calcium-binding domain. N-linked (GlcNAc...) asparagine glycosylation occurs at asparagine 1707. Positions 1728–2164 (MRKSFCYRSY…VPSLHDTRED (437 aa)) are interaction with MFAP4. The TB 7 domain occupies 1731-1784 (SFCYRSYNGTTCENELPFNVTKRMCCCTYNVGKAWNKPCEPCPTPGTADFKTIC). Asparagine 1738 and asparagine 1749 each carry an N-linked (GlcNAc...) asparagine glycan. Positions 1801–1842 (DIDECKEIPGICANGVCINQIGSFRCECPTGFSYNDLLLVCE) constitute an EGF-like 29; calcium-binding domain. Intrachain disulfides connect cysteine 1805-cysteine 1817, cysteine 1812-cysteine 1826, cysteine 1828-cysteine 1841, cysteine 1847-cysteine 1860, cysteine 1854-cysteine 1869, cysteine 1871-cysteine 1883, cysteine 1889-cysteine 1901, cysteine 1896-cysteine 1910, cysteine 1912-cysteine 1925, cysteine 1931-cysteine 1941, cysteine 1936-cysteine 1950, cysteine 1952-cysteine 1964, cysteine 1970-cysteine 1983, cysteine 1978-cysteine 1992, cysteine 1994-cysteine 2007, cysteine 2013-cysteine 2025, cysteine 2020-cysteine 2034, cysteine 2036-cysteine 2047, cysteine 2053-cysteine 2065, cysteine 2060-cysteine 2074, and cysteine 2076-cysteine 2089. One can recognise an EGF-like 30; calcium-binding domain in the interval 1843-1884 (DIDECSNGDNLCQRNADCINSPGSYRCECAAGFKLSPNGACV). A glycan (O-linked (Glc) serine) is linked at serine 1866. An EGF-like 31; calcium-binding domain is found at 1885–1926 (DRNECLEIPNVCSHGLCVDLQGSYQCICNNGFKASQDQTMCM). An EGF-like 32; calcium-binding domain is found at 1927–1965 (DVDECERHPCGNGTCKNTVGSYNCLCYPGFELTHNNDCL). A glycan (N-linked (GlcNAc...) asparagine) is linked at asparagine 1938. Serine 1947 is a glycosylation site (O-linked (Glc) serine). Residues 1966 to 2008 (DIDECSSFFGQVCRNGRCFNEIGSFKCLCNEGYELTPDGKNCI) enclose the EGF-like 33; calcium-binding domain. O-linked (Glc) serine glycosylation occurs at serine 1989. In terms of domain architecture, EGF-like 34; calcium-binding spans 2009–2048 (DTNECVALPGSCSPGTCQNLEGSFRCICPPGYEVRSENCI). An EGF-like 35; calcium-binding domain is found at 2049–2090 (DINECDEDPNICLFGSCTNTPGGFQCICPPGFVLSDNGRRCF). The TB 8 domain maps to 2095 to 2148 (SFCFTNFENGKCSVPKAFNTTKAKCCCSKMPGEGWGDPCELCPKDDEVAFQDLC). A glycan (N-linked (GlcNAc...) asparagine) is linked at asparagine 2113. Residues 2164 to 2205 (DVNECLESPGICSNGQCINTDGSFRCECPMGYNLDYTGVRCV) enclose the EGF-like 36; calcium-binding domain. 15 cysteine pairs are disulfide-bonded: cysteine 2168–cysteine 2180, cysteine 2175–cysteine 2189, cysteine 2191–cysteine 2204, cysteine 2210–cysteine 2221, cysteine 2216–cysteine 2230, cysteine 2232–cysteine 2244, cysteine 2250–cysteine 2261, cysteine 2257–cysteine 2270, cysteine 2272–cysteine 2285, cysteine 2291–cysteine 2305, cysteine 2298–cysteine 2314, cysteine 2316–cysteine 2329, cysteine 2335–cysteine 2347, cysteine 2342–cysteine 2356, and cysteine 2358–cysteine 2371. Serine 2186 is a glycosylation site (O-linked (Glc) serine). In terms of domain architecture, EGF-like 37; calcium-binding spans 2206 to 2245 (DTDECSIGNPCGNGTCTNVIGSFECTCNEGFEPGPMMNCE). Residue asparagine 2218 is glycosylated (N-linked (GlcNAc...) asparagine). An EGF-like 38; calcium-binding domain is found at 2246–2286 (DINECAQNPLLCAFRCMNTFGSYECTCPVGYALREDQKMCK). Serine 2267 carries O-linked (Glc) serine glycosylation. The region spanning 2287–2330 (DLDECAEGLHDCESRGMMCKNLIGTFMCICPPGMARRPDGEGCV) is the EGF-like 39; calcium-binding domain. Positions 2331–2372 (DENECRTKPGICENGRCVNIIGSYRCECNEGFQSSSSGTECL) constitute an EGF-like 40; calcium-binding domain. O-linked (Glc) serine glycosylation is present at serine 2353. The 54-residue stretch at 2377–2430 (GLCFAEVLQTMCQMASSSRNLVTKSECCCDGGRGWGHQCELCPLPGTAQYKKIC) folds into the TB 9 domain. Positions 2442–2483 (DIDECKVMPSLCTNGQCVNTMGSFRCFCKVGYTTDISGTACV) constitute an EGF-like 41; calcium-binding domain. 21 cysteine pairs are disulfide-bonded: cysteine 2446–cysteine 2458, cysteine 2453–cysteine 2467, cysteine 2469–cysteine 2482, cysteine 2488–cysteine 2499, cysteine 2495–cysteine 2508, cysteine 2510–cysteine 2523, cysteine 2529–cysteine 2540, cysteine 2536–cysteine 2549, cysteine 2551–cysteine 2562, cysteine 2568–cysteine 2581, cysteine 2575–cysteine 2590, cysteine 2592–cysteine 2605, cysteine 2611–cysteine 2621, cysteine 2617–cysteine 2630, cysteine 2632–cysteine 2645, cysteine 2651–cysteine 2662, cysteine 2657–cysteine 2671, cysteine 2673–cysteine 2686, cysteine 2692–cysteine 2703, cysteine 2699–cysteine 2712, and cysteine 2714–cysteine 2726. Serine 2464 is a glycosylation site (O-linked (Glc) serine). In terms of domain architecture, EGF-like 42; calcium-binding spans 2484-2524 (DLDECSQSPKPCNFICKNTKGSYQCSCPRGYVLQEDGKTCK). The O-linked (Glc) serine glycan is linked to serine 2505. An EGF-like 43; calcium-binding domain is found at 2525–2563 (DLDECQTKQHNCQFLCVNTLGGFTCKCPPGFTQHHTACI). Residues 2564 to 2606 (DNNECGSQPSLCGAKGICQNTPGSFSCECQRGFSLDASGLNCE) enclose the EGF-like 44; calcium-binding domain. O-linked (Glc) serine glycosylation is present at serine 2587. The region spanning 2607–2646 (DVDECDGNHRCQHGCQNILGGYRCGCPQGYVQHYQWNQCV) is the EGF-like 45; calcium-binding domain. The EGF-like 46; calcium-binding domain maps to 2647 to 2687 (DENECSNPGACGSASCYNTLGSYKCACPSGFSFDQFSSACH). Serine 2668 carries an O-linked (Glc) serine glycan. Residues 2688 to 2727 (DVNECSSSKNPCSYGCSNTEGGYLCGCPPGYFRVGQGHCV) form the EGF-like 47; calcium-binding domain. N-linked (GlcNAc...) asparagine glycosylation is present at asparagine 2803.

The protein belongs to the fibrillin family. Interacts with BMP2, BMP4, BMP7, BMP10 and GDF5. Interacts with MFAP2 and MFAP5. Interacts with ADAMTSL5. Interacts with MFAP4. In terms of processing, N-glycosylated. O-glycosylated on serine residues by POGLUT2 and POGLUT3. In terms of tissue distribution, widely expressed.

It localises to the secreted. The protein localises to the extracellular space. It is found in the extracellular matrix. Its function is as follows. Fibrillins are structural components of 10-12 nm extracellular calcium-binding microfibrils, which occur either in association with elastin or in elastin-free bundles. Fibrillin-2-containing microfibrils regulate the early process of elastic fiber assembly. Regulates osteoblast maturation by controlling TGF-beta bioavailability and calibrating TGF-beta and BMP levels, respectively. Functionally, hormone secreted by trophoblasts that promotes trophoblast invasiveness. Has glucogenic activity: is able to increase plasma glucose levels. This Mus musculus (Mouse) protein is Fibrillin-2.